Here is a 279-residue protein sequence, read N- to C-terminus: Ankyrin repeat domain-containing protein 7 (279 aa).

The span at 1–11 (MKKFFPFRGKR) shows a compositional bias: basic residues. A disordered region spans residues 1-25 (MKKFFPFRGKRKTDDSHSHSSEVPI). ANK repeat units lie at residues 80 to 109 (RSRT…KINV), 113 to 142 (ENRT…DPNL), 146 to 175 (YSNT…NLEA), 179 to 208 (DGHT…DVNA), and 212 to 241 (NHRT…DLAH).

The protein is Ankyrin repeat domain-containing protein 7 (Ankrd7) of Mus musculus (Mouse).